The following is a 393-amino-acid chain: GDNF family receptor alpha-like (393 aa).

The N-terminal stretch at 1–19 (MLVFIFLAVTLSSENESSS) is a signal peptide. Residues 20–349 (QTNDCAHLIQ…LTGFNSFFNG (330 aa)) are Extracellular-facing. N-linked (GlcNAc...) asparagine glycosylation is found at Asn59, Asn65, Asn101, and Asn115. 11 disulfides stabilise this stretch: Cys131–Cys189, Cys138–Cys144, Cys155–Cys167, Cys162–Cys210, Cys191–Cys198, Cys220–Cys291, Cys227–Cys233, Cys244–Cys275, Cys252–Cys258, Cys269–Cys316, and Cys293–Cys304. The segment at 149 to 228 (ALYLKACSAN…TCLSVIHTCR (80 aa)) is required for interaction with GDF15. Residues 350 to 370 (ELLYVVVCMAVTCGILFLVML) form a helical membrane-spanning segment. The Cytoplasmic portion of the chain corresponds to 371 to 393 (KLRIQSEKRDPSSIEIAGGVIIQ).

Belongs to the GDNFR family. In terms of assembly, interacts (via the extracellular domain) with GDF15 and RET; receptor of GDF15, mediates cellular signaling through interaction with RET after GDF15-binding. Interaction with RET requires previous GDF15-binding. Post-translationally, cleaved and inactivated by MMP14, inhibiting the GDF15-GFRAL aversive response. As to expression, expressed in the brainstem, restricted to cells in the area postrema and the immediately adjacent region of the nucleus tractus solitarius.

Its subcellular location is the cell membrane. Its activity is regulated as follows. Specifically inhibited by 3P10 monoclonal antibody. Strongly activated by LY3463251, a long-acting and stable agonist composed of GDF15 conjugated monomeric human IgG4 Fc. Brainstem-restricted receptor for GDF15 hormone, which triggers an aversive response, characterized by nausea, vomiting, and/or loss of appetite in response to various stresses. The aversive response is both required to reduce continuing exposure to those stresses at the time of exposure and to promote avoidance behavior in the future. The GDF15-GFRAL aversive response is triggered by stresses, such as anticancer drugs (camptothecin or cisplatin), cancers or drugs such as metformin. Upon interaction with its ligand, GDF15, mediates the GDF15-induced autophosphorylation and activation of the RET tyrosine kinase receptor, leading to activation of MAPK- and AKT- signaling pathways. Ligand-binding activates GFRAL-expressing neurons localized in the area postrema and nucleus tractus solitarius of the brainstem. The GDF15-GFRAL signal induces expression of genes involved in metabolism, such as lipid metabolism in adipose tissues. This Mus musculus (Mouse) protein is GDNF family receptor alpha-like (Gfral).